Consider the following 163-residue polypeptide: Large ribosomal subunit protein uL10 (163 aa).

The protein belongs to the universal ribosomal protein uL10 family. Part of the ribosomal stalk of the 50S ribosomal subunit. The N-terminus interacts with L11 and the large rRNA to form the base of the stalk. The C-terminus forms an elongated spine to which L12 dimers bind in a sequential fashion forming a multimeric L10(L12)X complex.

Functionally, forms part of the ribosomal stalk, playing a central role in the interaction of the ribosome with GTP-bound translation factors. The protein is Large ribosomal subunit protein uL10 of Haemophilus influenzae (strain PittEE).